The following is a 255-amino-acid chain: Hydroxyacylglutathione hydrolase (255 aa).

Positions 55, 57, 59, 60, 112, 129, and 167 each coordinate Zn(2+).

Belongs to the metallo-beta-lactamase superfamily. Glyoxalase II family. Monomer. The cofactor is Zn(2+).

The catalysed reaction is an S-(2-hydroxyacyl)glutathione + H2O = a 2-hydroxy carboxylate + glutathione + H(+). It functions in the pathway secondary metabolite metabolism; methylglyoxal degradation; (R)-lactate from methylglyoxal: step 2/2. Its function is as follows. Thiolesterase that catalyzes the hydrolysis of S-D-lactoyl-glutathione to form glutathione and D-lactic acid. The polypeptide is Hydroxyacylglutathione hydrolase (Halorhodospira halophila (strain DSM 244 / SL1) (Ectothiorhodospira halophila (strain DSM 244 / SL1))).